The chain runs to 322 residues: uncharacterized protein (322 aa).

The protein to M.jannaschii MJ0640 and MJ0799.

This is an uncharacterized protein from Synechocystis sp. (strain ATCC 27184 / PCC 6803 / Kazusa).